The primary structure comprises 111 residues: Photosystem II reaction center Psb28 protein (111 aa).

It belongs to the Psb28 family. Part of the photosystem II complex.

It is found in the cellular thylakoid membrane. The sequence is that of Photosystem II reaction center Psb28 protein from Gloeothece citriformis (strain PCC 7424) (Cyanothece sp. (strain PCC 7424)).